Consider the following 353-residue polypeptide: Thiamine-phosphate synthase (353 aa).

Positions 1-128 (MELMVVEADA…ASTAAEIRYG (128 aa)) are unknown. The segment at 129–353 (LYDLEVRILE…ASRTLLQTLA (225 aa)) is thiamine-phosphate synthase. Residues 185–189 (QYRRK) and Asn-217 each bind 4-amino-2-methyl-5-(diphosphooxymethyl)pyrimidine. 2 residues coordinate Mg(2+): Asp-218 and Asp-237. Ser-256 contacts 4-amino-2-methyl-5-(diphosphooxymethyl)pyrimidine. 282–284 (TKT) contributes to the 2-[(2R,5Z)-2-carboxy-4-methylthiazol-5(2H)-ylidene]ethyl phosphate binding site. A 4-amino-2-methyl-5-(diphosphooxymethyl)pyrimidine-binding site is contributed by Lys-285. Gly-312 provides a ligand contact to 2-[(2R,5Z)-2-carboxy-4-methylthiazol-5(2H)-ylidene]ethyl phosphate.

The protein belongs to the thiamine-phosphate synthase family. The cofactor is Mg(2+).

It catalyses the reaction 2-[(2R,5Z)-2-carboxy-4-methylthiazol-5(2H)-ylidene]ethyl phosphate + 4-amino-2-methyl-5-(diphosphooxymethyl)pyrimidine + 2 H(+) = thiamine phosphate + CO2 + diphosphate. The catalysed reaction is 2-(2-carboxy-4-methylthiazol-5-yl)ethyl phosphate + 4-amino-2-methyl-5-(diphosphooxymethyl)pyrimidine + 2 H(+) = thiamine phosphate + CO2 + diphosphate. It carries out the reaction 4-methyl-5-(2-phosphooxyethyl)-thiazole + 4-amino-2-methyl-5-(diphosphooxymethyl)pyrimidine + H(+) = thiamine phosphate + diphosphate. It functions in the pathway cofactor biosynthesis; thiamine diphosphate biosynthesis; thiamine phosphate from 4-amino-2-methyl-5-diphosphomethylpyrimidine and 4-methyl-5-(2-phosphoethyl)-thiazole: step 1/1. In terms of biological role, condenses 4-methyl-5-(beta-hydroxyethyl)thiazole monophosphate (THZ-P) and 2-methyl-4-amino-5-hydroxymethyl pyrimidine pyrophosphate (HMP-PP) to form thiamine monophosphate (TMP). This is Thiamine-phosphate synthase from Synechococcus sp. (strain CC9311).